The following is a 271-amino-acid chain: Metal-staphylopine import system ATP-binding protein CntD (271 aa).

Residues 6 to 251 enclose the ABC transporter domain; the sequence is VKHLTITDTW…PEHVYTKYLL (246 aa). 38–45 is an ATP binding site; that stretch reads GESGSGKS.

It belongs to the ABC transporter superfamily. In terms of assembly, the complex is composed of two ATP-binding proteins (CntD and CntF), two transmembrane proteins (CntB and CntC) and a solute-binding protein (CntA).

The protein localises to the cell membrane. With respect to regulation, nickel/cobalt import is reduced in the presence of zinc. Its function is as follows. Part of the ABC transporter complex CntABCDF (Opp1) involved in the uptake of metal in complex with the metallophore staphylopine (StP). Involved in the import of divalent metals ions such as nickel, cobalt and zinc. Probably responsible for energy coupling to the transport system. Plays a major role in nickel/cobalt import in zinc-depleted conditions. Contributes to virulence. Required for full urease activity in vitro. The chain is Metal-staphylopine import system ATP-binding protein CntD from Staphylococcus aureus (strain NCTC 8325 / PS 47).